Reading from the N-terminus, the 3106-residue chain is Probable polyketide synthase 29 (3106 aa).

Positions 1–11 are enriched in polar residues; it reads MVQNTDNTRNS. The interval 1–20 is disordered; sequence MVQNTDNTRNSKLIRDRNDY. Residues 28–461 enclose the Ketosynthase family 3 (KS3) domain; sequence SGDIAVIGIG…GSNVCLILSE (434 aa). Active-site for beta-ketoacyl synthase activity residues include cysteine 200, histidine 339, and histidine 384. The tract at residues 661-694 is acyl/malonyl transferase; that stretch reads GVSADIIIGHSLGEVSSPYCSGMIDFQTLCYLTY. The active-site For acyl/malonyl transferase activity is the serine 671. The tract at residues 961 to 1082 is N-terminal hotdog fold; it reads PSIHGLGNNT…GNFSLTKHNS (122 aa). One can recognise a PKS/mFAS DH domain in the interval 961 to 1266; it reads PSIHGLGNNT…CALVSLDSNP (306 aa). Histidine 994 functions as the Proton acceptor; for dehydratase activity in the catalytic mechanism. A C-terminal hotdog fold region spans residues 1099-1266; sequence NFTSISKQDF…CALVSLDSNP (168 aa). The Proton donor; for dehydratase activity role is filled by aspartate 1171. The region spanning 2533–2610 is the Carrier domain; it reads NNNEIIRSTI…QSIEIILSAH (78 aa). Serine 2570 carries the post-translational modification O-(pantetheine 4'-phosphoryl)serine. The stretch at 2609-2656 forms a coiled coil; it reads AHNNNNKNNNNNNNINNNNKNNNNNNNKNNNNINNNINNNKNNNNNNN. Residues 2614-2656 form a disordered region; it reads NKNNNNNNNINNNNKNNNNNNNKNNNNINNNINNNKNNNNNNN.

Pantetheine 4'-phosphate is required as a cofactor.

Its function is as follows. Probable polyketide synthase. This chain is Probable polyketide synthase 29 (pks29), found in Dictyostelium discoideum (Social amoeba).